The sequence spans 122 residues: UPF0102 protein Atu0303 (122 aa).

The protein belongs to the UPF0102 family.

The chain is UPF0102 protein Atu0303 from Agrobacterium fabrum (strain C58 / ATCC 33970) (Agrobacterium tumefaciens (strain C58)).